The chain runs to 249 residues: UPF0758 protein Oant_1909 (249 aa).

The MPN domain maps to 127–249 (VLGSWNKVIE…HASFRGLGLI (123 aa)). H198, H200, and D211 together coordinate Zn(2+). The JAMM motif motif lies at 198–211 (HNHPSGDPTPSRAD).

It belongs to the UPF0758 family.

The polypeptide is UPF0758 protein Oant_1909 (Brucella anthropi (strain ATCC 49188 / DSM 6882 / CCUG 24695 / JCM 21032 / LMG 3331 / NBRC 15819 / NCTC 12168 / Alc 37) (Ochrobactrum anthropi)).